The sequence spans 475 residues: Argininosuccinate lyase (475 aa).

The protein belongs to the lyase 1 family. Argininosuccinate lyase subfamily.

The protein localises to the cytoplasm. The catalysed reaction is 2-(N(omega)-L-arginino)succinate = fumarate + L-arginine. It functions in the pathway amino-acid biosynthesis; L-arginine biosynthesis; L-arginine from L-ornithine and carbamoyl phosphate: step 3/3. The protein is Argininosuccinate lyase of Leifsonia xyli subsp. xyli (strain CTCB07).